Here is a 220-residue protein sequence, read N- to C-terminus: Cytidylate kinase (220 aa).

ATP is bound at residue 9–17 (GPAASGKST).

It belongs to the cytidylate kinase family. Type 1 subfamily.

It is found in the cytoplasm. It catalyses the reaction CMP + ATP = CDP + ADP. The enzyme catalyses dCMP + ATP = dCDP + ADP. The chain is Cytidylate kinase from Thermotoga maritima (strain ATCC 43589 / DSM 3109 / JCM 10099 / NBRC 100826 / MSB8).